The sequence spans 298 residues: Tyrosine recombinase XerC (298 aa).

One can recognise a Core-binding (CB) domain in the interval 1–83; it reads MHAAVERFLH…ALSRFADHLV (83 aa). Positions 104-283 constitute a Tyr recombinase domain; that stretch reads HLPRPVDVDQ…DWQHLADAYD (180 aa). Residues Arg-144, Lys-166, His-235, Arg-238, and His-261 contribute to the active site. Tyr-270 functions as the O-(3'-phospho-DNA)-tyrosine intermediate in the catalytic mechanism.

The protein belongs to the 'phage' integrase family. XerC subfamily. Forms a cyclic heterotetrameric complex composed of two molecules of XerC and two molecules of XerD.

It localises to the cytoplasm. In terms of biological role, site-specific tyrosine recombinase, which acts by catalyzing the cutting and rejoining of the recombining DNA molecules. The XerC-XerD complex is essential to convert dimers of the bacterial chromosome into monomers to permit their segregation at cell division. It also contributes to the segregational stability of plasmids. The polypeptide is Tyrosine recombinase XerC (Chromohalobacter salexigens (strain ATCC BAA-138 / DSM 3043 / CIP 106854 / NCIMB 13768 / 1H11)).